The primary structure comprises 241 residues: MTFYFYFVINMEKVAIYIIGDIVLAENTGKALKKWRNLFNIQQIELAKYLNVSPSVISDYEVGRRKNPGVNIIKKYVLALIEIDKEKGGQTIKALKRILDKSPSMKAILSIKEYENPITLNEFVNIIDGEIAVGDNSDTPIYGHTVVDSIKAILEMTGDDFYHLYGWTTERALIFTNVSTGRSPMVAVRVSIMKPRVVVLQGINKDKIDSLALKLAEIDNIPLITTHLDTKELIKRLNEIK.

The HTH cro/C1-type domain maps to 32-86 (LKKWRNLFNIQQIELAKYLNVSPSVISDYEVGRRKNPGVNIIKKYVLALIEIDKE). Residues 43 to 62 (QIELAKYLNVSPSVISDYEV) constitute a DNA-binding region (H-T-H motif).

This is an uncharacterized protein from Methanocaldococcus jannaschii (strain ATCC 43067 / DSM 2661 / JAL-1 / JCM 10045 / NBRC 100440) (Methanococcus jannaschii).